A 388-amino-acid chain; its full sequence is Ferrochelatase (388 aa).

Fe cation is bound by residues H197 and E278.

Belongs to the ferrochelatase family.

It is found in the cytoplasm. It catalyses the reaction heme b + 2 H(+) = protoporphyrin IX + Fe(2+). It participates in porphyrin-containing compound metabolism; protoheme biosynthesis; protoheme from protoporphyrin-IX: step 1/1. Catalyzes the ferrous insertion into protoporphyrin IX. This is Ferrochelatase from Thermosynechococcus vestitus (strain NIES-2133 / IAM M-273 / BP-1).